A 105-amino-acid chain; its full sequence is Immunoglobulin lambda-like polypeptide 1 (105 aa).

The c region stretch occupies residues 1-105 (QPKSDPLVTL…EKSVSPAECS (105 aa)). The 95-residue stretch at 6–100 (PLVTLFLPSL…EGNTVEKSVS (95 aa)) folds into the Ig-like C1-type domain. A disulfide bridge connects residues C27 and C86.

In terms of assembly, associates non-covalently with VPREB1A. Interacts with SYNV1/HRD1 (via N-terminus); this interaction leads to increased IGLL1 ubiquitination and degradation in pre-B cells, possibly through a lysosomal, not proteasomal, pathway.

It is found in the endoplasmic reticulum. The protein localises to the secreted. In terms of biological role, critical for B-cell development. The sequence is that of Immunoglobulin lambda-like polypeptide 1 (Igll1) from Mus spretus (Western Mediterranean mouse).